We begin with the raw amino-acid sequence, 234 residues long: Probable transcriptional regulatory protein PSPTO_3162 (234 aa).

It belongs to the TACO1 family.

The protein localises to the cytoplasm. This is Probable transcriptional regulatory protein PSPTO_3162 from Pseudomonas syringae pv. tomato (strain ATCC BAA-871 / DC3000).